The following is a 207-amino-acid chain: Antitermination protein Q (207 aa).

Positions 1–28 (MRLESVAKFHSPKSPMMSDSPRATASDS) are disordered. Zn(2+) contacts are provided by C118, C121, C144, and C147. The segment at 118–147 (CRNCHGTGRAVDIAKTEQWGRVVEKECGRC) is a zinc-finger region. The DNA-binding element occupies 171–192 (LTQPTWSRTVKPLYDALVVQCH).

It belongs to the phage antitermination Q type 2 family. As to quaternary structure, interacts with host RPOB (via flap domain); this interaction renders host RNAP resistant to transcription pausing and allows it to read through termination signals. Interacts with host RNA polymerase sigma factor RPOD (via domain-4). Interacts with host NusA (via N-terminus and AR2 domain); this interaction releases the autoinhibition of NusA.

Functionally, mediates the switch from middle to viral late gene expression by associating with host RNA polymerase (RNAP) so that the latter can read without pausing and through transcription terminators preceding late genes. Competes with host factor sigma 70 for binding to RPOB, the beta-subunit of host RNAP. To join the elongation complex, binds a specific DNA Q-binding element (QBE) and interacts with RNAP that is paused during early elongation. Participates in the lysis-lysogeny decision by activating the expression of the late lytic genes. This Salmonella typhimurium protein is Antitermination protein Q (23).